A 226-amino-acid polypeptide reads, in one-letter code: ATP-dependent dethiobiotin synthetase BioD (226 aa).

12 to 17 lines the ATP pocket; that stretch reads GVGKTV. Threonine 16 is a Mg(2+) binding site. Lysine 37 is a catalytic residue. A substrate-binding site is contributed by threonine 41. ATP contacts are provided by residues aspartate 49, 108–111, and 169–170; these read EGAG and GS. Residues aspartate 49 and glutamate 108 each contribute to the Mg(2+) site.

The protein belongs to the dethiobiotin synthetase family. In terms of assembly, homodimer. It depends on Mg(2+) as a cofactor.

The protein resides in the cytoplasm. It catalyses the reaction (7R,8S)-7,8-diammoniononanoate + CO2 + ATP = (4R,5S)-dethiobiotin + ADP + phosphate + 3 H(+). Its pathway is cofactor biosynthesis; biotin biosynthesis; biotin from 7,8-diaminononanoate: step 1/2. Catalyzes a mechanistically unusual reaction, the ATP-dependent insertion of CO2 between the N7 and N8 nitrogen atoms of 7,8-diaminopelargonic acid (DAPA, also called 7,8-diammoniononanoate) to form a ureido ring. The polypeptide is ATP-dependent dethiobiotin synthetase BioD (Mycobacterium marinum (strain ATCC BAA-535 / M)).